A 543-amino-acid polypeptide reads, in one-letter code: Carboxypeptidase Y homolog A (543 aa).

The first 17 residues, 1 to 17 (MKLLTTGLLASAALVAA), serve as a signal peptide directing secretion. A propeptide spanning residues 18–124 (QEQQVLRADE…KLKNYDLRVK (107 aa)) is cleaved from the precursor. 5 cysteine pairs are disulfide-bonded: Cys179/Cys419, Cys313/Cys327, Cys337/Cys360, Cys344/Cys353, and Cys382/Cys389. An N-linked (GlcNAc...) asparagine glycan is attached at Asn210. The active site involves Ser266. The active site involves Asp458. Residue Asn509 is glycosylated (N-linked (GlcNAc...) asparagine). The active site involves His520.

The protein belongs to the peptidase S10 family.

Its subcellular location is the vacuole. The catalysed reaction is Release of a C-terminal amino acid with broad specificity.. In terms of biological role, vacuolar carboxypeptidase involved in degradation of small peptides. Digests preferentially peptides containing an aliphatic or hydrophobic residue in P1' position, as well as methionine, leucine or phenylalanine in P1 position of ester substrate. This is Carboxypeptidase Y homolog A (CPYA) from Arthroderma gypseum (strain ATCC MYA-4604 / CBS 118893) (Microsporum gypseum).